The following is a 48-amino-acid chain: ATP synthase protein 8 (48 aa).

N-formylmethionine is present on Met1. Topologically, residues 1–12 are mitochondrial intermembrane; sequence MPQLVPFYFTNQ. Residues 13 to 32 traverse the membrane as a helical segment; that stretch reads IFYGFASLSVIVYLFSIYIL. Topologically, residues 33 to 48 are mitochondrial matrix; it reads PHYLEIYVTRIFITKT.

As to quaternary structure, F-type ATP synthases have 2 components, the catalytic core F(1) and the membrane-embedded component F(0), linked together by a central stalk and a peripheral stalk. The central stalk, also called rotor shaft, is often seen as part of F(1). The peripheral stalk is seen as part of F(0). F(0) contains the membrane channel next to the rotor. F-type ATP synthases form dimers but each monomer functions independently in ATP generation. The dimer consists of 17 different polypeptides: ATP1 (subunit alpha, 3 molecules per monomer, part of F(1)), ATP2 (subunit beta, 3 copies per monomer, part of F(1)), ATP3 (subunit gamma, part of the central stalk), ATP4 (subunit b, part of the peripheral stalk), ATP5/OSCP (subunit 5/OSCP, part of the peripheral stalk), ATP6 (subunit a, part of the peripheral stalk), ATP7 (subunit d, part of the peripheral stalk), ATP8 (subunit 8, part of the peripheral stalk), OLI1 (subunit c, part of the rotor, 10 molecules per monomer), ATP14 (subunit h, part of the peripheral stalk), ATP15 (subunit epsilon, part of the central stalk), ATP16 (subunit delta, part of the central stalk), ATP17 (subunit f, part of the peripheral stalk), ATP18 (subunit i/j, part of the peripheral stalk), ATP19 (subunit k, dimer-specific, at interface between monomers), ATP20 (subunit g, at interface between monomers), TIM11 (subunit e, at interface between monomers).

It is found in the mitochondrion inner membrane. Its function is as follows. Mitochondrial membrane ATP synthase (F(1)F(0) ATP synthase or Complex V) produces ATP from ADP in the presence of a proton gradient across the membrane which is generated by electron transport complexes of the respiratory chain. F-type ATP synthases consist of two structural domains, F(1) - containing the extramembraneous catalytic core, and F(0) - containing the membrane proton channel, linked together by a central stalk and a peripheral stalk. During catalysis, ATP synthesis in the catalytic domain of F(1) is coupled via a rotary mechanism of the central stalk subunits to proton translocation. Part of the complex F(0) domain. Minor subunit located with subunit a/ATP6 in the membrane. The protein is ATP synthase protein 8 of Yarrowia lipolytica (strain CLIB 122 / E 150) (Yeast).